Reading from the N-terminus, the 318-residue chain is tRNA pseudouridine synthase B (318 aa).

Asp-47 acts as the Nucleophile in catalysis.

It belongs to the pseudouridine synthase TruB family. Type 1 subfamily.

The catalysed reaction is uridine(55) in tRNA = pseudouridine(55) in tRNA. Its function is as follows. Responsible for synthesis of pseudouridine from uracil-55 in the psi GC loop of transfer RNAs. The protein is tRNA pseudouridine synthase B of Aliivibrio salmonicida (strain LFI1238) (Vibrio salmonicida (strain LFI1238)).